We begin with the raw amino-acid sequence, 315 residues long: Acetaldehyde dehydrogenase 2 (315 aa).

11 to 14 (SGNI) is a binding site for NAD(+). The active-site Acyl-thioester intermediate is Cys129. NAD(+) contacts are provided by residues 160 to 168 (SAGPGTRSN) and Asn290.

This sequence belongs to the acetaldehyde dehydrogenase family.

The enzyme catalyses acetaldehyde + NAD(+) + CoA = acetyl-CoA + NADH + H(+). This is Acetaldehyde dehydrogenase 2 from Mycobacterium sp. (strain KMS).